A 327-amino-acid polypeptide reads, in one-letter code: Glycoprotein integral membrane protein 1 (327 aa).

The signal sequence occupies residues 1–23 (MEGGLSAPLSVRLLLFIALPAAG). Over 24-259 (WLTTNAPRPP…LCRFWSSVVP (236 aa)) the chain is Extracellular. N-linked (GlcNAc...) asparagine glycans are attached at residues N44, N62, and N146. Residues 260–280 (VLFMFLDVMVVGVLGAAGVIA) form a helical membrane-spanning segment. Topologically, residues 281–327 (VLKLLFPVCENKGILQVDKMNGISVPIILYPDGSEKTAQKLTDKTDI) are cytoplasmic.

The protein resides in the membrane. The sequence is that of Glycoprotein integral membrane protein 1 (Ginm1) from Mus musculus (Mouse).